The sequence spans 206 residues: Large ribosomal subunit protein uL22m (206 aa).

Residues 1–40 (MAAAVLGQLGALWIHNLRSRGKLALGVLPQSYIHTSASLD) constitute a mitochondrion transit peptide.

This sequence belongs to the universal ribosomal protein uL22 family. Component of the mitochondrial large ribosomal subunit (mt-LSU). Mature mammalian 55S mitochondrial ribosomes consist of a small (28S) and a large (39S) subunit. The 28S small subunit contains a 12S ribosomal RNA (12S mt-rRNA) and 30 different proteins. The 39S large subunit contains a 16S rRNA (16S mt-rRNA), a copy of mitochondrial valine transfer RNA (mt-tRNA(Val)), which plays an integral structural role, and 52 different proteins.

It localises to the mitochondrion. The chain is Large ribosomal subunit protein uL22m (MRPL22) from Homo sapiens (Human).